Here is a 425-residue protein sequence, read N- to C-terminus: G protein-activated inward rectifier potassium channel 2 (425 aa).

Topologically, residues 1–91 (MTMAKLTESM…IFTTLVDLKW (91 aa)) are cytoplasmic. Ser-18 and Ser-25 each carry phosphoserine. A helical transmembrane segment spans residues 92–116 (RFNLLIFVMVYTVTWLFFGMIWWLI). At 117–140 (AYIRGDMDHIEDPSWTPCVTNLNG) the chain is on the extracellular side. An intramembrane region (helical; Pore-forming) is located at residues 141–152 (FVSAFLFSIETE). Residues 153-159 (TTIGYGY) constitute an intramembrane region (pore-forming). A Selectivity filter motif is present at residues 154 to 159 (TIGYGY). Residues 160–168 (RVITDKCPE) are Extracellular-facing. Residues 169–190 (GIILLLIQSVLGSIVNAFMVGC) traverse the membrane as a helical segment. The Cytoplasmic segment spans residues 191-425 (MFVKISQPKK…VANLENESKV (235 aa)). The tract at residues 392–425 (NQHAELETEEEEKNPEELTERNGDVANLENESKV) is disordered. The short motif at 422–425 (ESKV) is the PDZ-binding element.

It belongs to the inward rectifier-type potassium channel (TC 1.A.2.1) family. KCNJ6 subfamily. In terms of assembly, associates with KCNJ3/GIRK1to form a G-protein-activated heteromultimer pore-forming unit. Associates with KCNJ5/GRIK4 to form a G-protein-activated heteromultimer pore-forming unit. The resulting inward current is much larger. Interacts (via PDZ-binding motif) with SNX27 (via PDZ domain); the interaction is required when endocytosed to prevent degradation in lysosomes and promote recycling to the plasma membrane. Associates with KCNJ3/GRIK1 to form a G-protein-activated heteromultimer pore-forming unit. As to quaternary structure, associates with KCNJ3/GRIK1 to form a G-protein-activated heteromultimer pore-forming unit. The resulting inward current is much larger. In terms of tissue distribution, expressed in the brain.

It is found in the membrane. The catalysed reaction is K(+)(in) = K(+)(out). Activated by phosphatidylinositol 4,5 biphosphate (PtdIns(4,5)P2). Its function is as follows. Inward rectifier potassium channels are characterized by a greater tendency to allow potassium to flow into the cell rather than out of it. Their voltage dependence is regulated by the concentration of extracellular potassium; as external potassium is raised, the voltage range of the channel opening shifts to more positive voltages. The inward rectification is mainly due to the blockage of outward current by internal magnesium. This potassium channel is controlled by G proteins. Forms a functional channel in association with KCNJ3/GIRK1. In terms of biological role, inward rectifier potassium channels are characterized by a greater tendency to allow potassium to flow into the cell rather than out of it. Their voltage dependence is regulated by the concentration of extracellular potassium; as external potassium is raised, the voltage range of the channel opening shifts to more positive voltages. The inward rectification is mainly due to the blockage of outward current by internal magnesium. This potassium channel is controlled by G proteins. The protein is G protein-activated inward rectifier potassium channel 2 (Kcnj6) of Mus musculus (Mouse).